Here is a 309-residue protein sequence, read N- to C-terminus: Large ribosomal subunit protein uL22m (309 aa).

The transit peptide at 1–25 (MNFHTARISQVGVISRALLSSVSRR) directs the protein to the mitochondrion. The tract at residues 40-63 (SLFGSITENKPKEGKNRGDEDAGS) is disordered. Basic and acidic residues predominate over residues 48 to 59 (NKPKEGKNRGDE).

It belongs to the universal ribosomal protein uL22 family. Component of the mitochondrial large ribosomal subunit (mt-LSU). Mature yeast 74S mitochondrial ribosomes consist of a small (37S) and a large (54S) subunit. The 37S small subunit contains a 15S ribosomal RNA (15S mt-rRNA) and 34 different proteins. The 54S large subunit contains a 21S rRNA (21S mt-rRNA) and 46 different proteins. uL22m forms the wall of the exit tunnel.

The protein resides in the mitochondrion. Component of the mitochondrial ribosome (mitoribosome), a dedicated translation machinery responsible for the synthesis of mitochondrial genome-encoded proteins, including at least some of the essential transmembrane subunits of the mitochondrial respiratory chain. The mitoribosomes are attached to the mitochondrial inner membrane and translation products are cotranslationally integrated into the membrane. This Saccharomyces cerevisiae (strain ATCC 204508 / S288c) (Baker's yeast) protein is Large ribosomal subunit protein uL22m (MRPL22).